The chain runs to 792 residues: Lon protease (792 aa).

Residues 16-208 (LPILPLRETV…KVTYYLTREL (193 aa)) form the Lon N-terminal domain. An ATP-binding site is contributed by 360–367 (GPPGVGKT). The Lon proteolytic domain maps to 597–778 (KDEVGVATGL…DEVLNLALLE (182 aa)). Catalysis depends on residues Ser-684 and Lys-727.

It belongs to the peptidase S16 family. Homohexamer. Organized in a ring with a central cavity.

Its subcellular location is the cytoplasm. The enzyme catalyses Hydrolysis of proteins in presence of ATP.. ATP-dependent serine protease that mediates the selective degradation of mutant and abnormal proteins as well as certain short-lived regulatory proteins. Required for cellular homeostasis and for survival from DNA damage and developmental changes induced by stress. Degrades polypeptides processively to yield small peptide fragments that are 5 to 10 amino acids long. Binds to DNA in a double-stranded, site-specific manner. The sequence is that of Lon protease from Dictyoglomus thermophilum (strain ATCC 35947 / DSM 3960 / H-6-12).